A 40-amino-acid polypeptide reads, in one-letter code: Photosystem II reaction center protein J (40 aa).

A helical membrane pass occupies residues 8–28 (IPLWIIGTVTGLLVIGLIGIF).

This sequence belongs to the PsbJ family. In terms of assembly, PSII is composed of 1 copy each of membrane proteins PsbA, PsbB, PsbC, PsbD, PsbE, PsbF, PsbH, PsbI, PsbJ, PsbK, PsbL, PsbM, PsbT, PsbX, PsbY, PsbZ, Psb30/Ycf12, at least 3 peripheral proteins of the oxygen-evolving complex and a large number of cofactors. It forms dimeric complexes.

The protein resides in the plastid. It is found in the chloroplast thylakoid membrane. One of the components of the core complex of photosystem II (PSII). PSII is a light-driven water:plastoquinone oxidoreductase that uses light energy to abstract electrons from H(2)O, generating O(2) and a proton gradient subsequently used for ATP formation. It consists of a core antenna complex that captures photons, and an electron transfer chain that converts photonic excitation into a charge separation. The sequence is that of Photosystem II reaction center protein J from Ipomoea purpurea (Common morning glory).